The primary structure comprises 214 residues: uncharacterized protein (214 aa).

The protein belongs to the uracil-DNA glycosylase (UDG) superfamily.

This is an uncharacterized protein from Haemophilus influenzae (strain ATCC 51907 / DSM 11121 / KW20 / Rd).